A 494-amino-acid chain; its full sequence is uncharacterized protein (494 aa).

The 2Fe-2S ferredoxin-type domain maps to 4-82 (FTITVKKTEG…NMIIEPLEGF (79 aa)). [2Fe-2S] cluster is bound by residues Cys46, Cys51, Cys54, and Cys66. 4Fe-4S ferredoxin-type domains lie at 127–157 (DLKDVKKIRGCIDCLSCIAMCPARKYSNYPG) and 178–208 (EKEAFDENIYNCTTCGRCVEVCPKEIDIVHN). Positions 137, 140, 143, 147, 189, 192, 195, and 199 each coordinate [4Fe-4S] cluster.

Belongs to the succinate dehydrogenase/fumarate reductase iron-sulfur protein family.

This is an uncharacterized protein from Methanococcus maripaludis (strain DSM 14266 / JCM 13030 / NBRC 101832 / S2 / LL).